The following is a 430-amino-acid chain: Elongation factor 1-alpha (430 aa).

Residues 7-219 form the tr-type G domain; sequence KPHVNIVFIG…DQIPEPEKPV (213 aa). Residues 16–23 form a G1 region; the sequence is GHVDHGKS. Residue 16-23 participates in GTP binding; the sequence is GHVDHGKS. Ser23 serves as a coordination point for Mg(2+). Residues 70 to 74 are G2; it reads GITID. The interval 91-94 is G3; that stretch reads DAPG. GTP-binding positions include 91 to 95 and 146 to 149; these read DAPGH and NKMD. Positions 146 to 149 are G4; sequence NKMD. Positions 183–185 are G5; the sequence is SAW.

This sequence belongs to the TRAFAC class translation factor GTPase superfamily. Classic translation factor GTPase family. EF-Tu/EF-1A subfamily.

The protein localises to the cytoplasm. It carries out the reaction GTP + H2O = GDP + phosphate + H(+). Functionally, GTP hydrolase that promotes the GTP-dependent binding of aminoacyl-tRNA to the A-site of ribosomes during protein biosynthesis. The chain is Elongation factor 1-alpha from Pyrococcus woesei.